A 198-amino-acid chain; its full sequence is uncharacterized protein (198 aa).

Its subcellular location is the plastid. The protein localises to the chloroplast. This is an uncharacterized protein from Antithamnion sp. (Red alga).